The chain runs to 231 residues: DNA mismatch repair protein MutH (231 aa).

This sequence belongs to the MutH family.

Its subcellular location is the cytoplasm. In terms of biological role, sequence-specific endonuclease that cleaves unmethylated GATC sequences. It is involved in DNA mismatch repair. The polypeptide is DNA mismatch repair protein MutH (Salmonella paratyphi C (strain RKS4594)).